A 96-amino-acid polypeptide reads, in one-letter code: Co-chaperonin GroES (96 aa).

It belongs to the GroES chaperonin family. In terms of assembly, heptamer of 7 subunits arranged in a ring. Interacts with the chaperonin GroEL.

It localises to the cytoplasm. In terms of biological role, together with the chaperonin GroEL, plays an essential role in assisting protein folding. The GroEL-GroES system forms a nano-cage that allows encapsulation of the non-native substrate proteins and provides a physical environment optimized to promote and accelerate protein folding. GroES binds to the apical surface of the GroEL ring, thereby capping the opening of the GroEL channel. This Thioalkalivibrio sulfidiphilus (strain HL-EbGR7) protein is Co-chaperonin GroES.